A 407-amino-acid chain; its full sequence is Phosphopentomutase (407 aa).

The Mn(2+) site is built by Asp11, Asp305, His310, Asp346, His347, and His358.

The protein belongs to the phosphopentomutase family. Mn(2+) serves as cofactor.

The protein resides in the cytoplasm. It catalyses the reaction 2-deoxy-alpha-D-ribose 1-phosphate = 2-deoxy-D-ribose 5-phosphate. It carries out the reaction alpha-D-ribose 1-phosphate = D-ribose 5-phosphate. It functions in the pathway carbohydrate degradation; 2-deoxy-D-ribose 1-phosphate degradation; D-glyceraldehyde 3-phosphate and acetaldehyde from 2-deoxy-alpha-D-ribose 1-phosphate: step 1/2. Functionally, isomerase that catalyzes the conversion of deoxy-ribose 1-phosphate (dRib-1-P) and ribose 1-phosphate (Rib-1-P) to deoxy-ribose 5-phosphate (dRib-5-P) and ribose 5-phosphate (Rib-5-P), respectively. The polypeptide is Phosphopentomutase (Legionella pneumophila (strain Corby)).